The chain runs to 309 residues: HPr kinase/phosphorylase (309 aa).

Active-site residues include H144 and K165. 159 to 166 is an ATP binding site; that stretch reads GDSGLGKS. A Mg(2+)-binding site is contributed by S166. The active-site Proton acceptor; for phosphorylation activity. Proton donor; for dephosphorylation activity is the D183. An important for the catalytic mechanism of both phosphorylation and dephosphorylation region spans residues 206 to 215; that stretch reads IEVRGLGLID. E207 is a Mg(2+) binding site. The active site involves R249. The segment at 270–275 is important for the catalytic mechanism of dephosphorylation; it reads PIRQGR.

The protein belongs to the HPrK/P family. As to quaternary structure, homohexamer. Mg(2+) serves as cofactor.

It catalyses the reaction [HPr protein]-L-serine + ATP = [HPr protein]-O-phospho-L-serine + ADP + H(+). It carries out the reaction [HPr protein]-O-phospho-L-serine + phosphate + H(+) = [HPr protein]-L-serine + diphosphate. Functionally, catalyzes the ATP- as well as the pyrophosphate-dependent phosphorylation of a specific serine residue in HPr, a phosphocarrier protein of the phosphoenolpyruvate-dependent sugar phosphotransferase system (PTS). HprK/P also catalyzes the pyrophosphate-producing, inorganic phosphate-dependent dephosphorylation (phosphorolysis) of seryl-phosphorylated HPr (P-Ser-HPr). This Mycoplasmopsis pulmonis (strain UAB CTIP) (Mycoplasma pulmonis) protein is HPr kinase/phosphorylase (hprK).